The following is a 1323-amino-acid chain: ABC transporter C family member 12 (1323 aa).

Residues 110–396 form the ABC transmembrane type-1 1 domain; that stretch reads HCISLFFYSI…LPILIALGIQ (287 aa). A run of 6 helical transmembrane segments spans residues 111 to 131, 152 to 172, 227 to 247, 252 to 272, 338 to 358, and 375 to 395; these read CISL…PEIL, MGYY…FCNY, VFGI…CLAL, IGWP…FNGL, ILIA…FSTY, and SYLN…ALGI. In terms of domain architecture, ABC transporter 1 spans 428 to 652; that stretch reads VYMKNSTTTW…KLEFASLLQE (225 aa). Position 464–471 (464–471) interacts with ATP; sequence GSVGSGKS. Positions 657 to 695 are disordered; sequence ENTKGDDSDDDDDKKDDDKKEEKVEKPKQSDKDGTLISE. Positions 672–690 are enriched in basic and acidic residues; it reads DDDKKEEKVEKPKQSDKDG. 5 consecutive transmembrane segments (helical) span residues 712–732, 772–792, 840–860, 862–882, and 952–972; these read VTAG…LETG, IYIG…FSFF, LIAT…ATLI, ISII…LFFI, and WLGL…CIFI. The 291-residue stretch at 720–1010 folds into the ABC transmembrane type-1 2 domain; it reads FLFAMILFLL…GVLQAADTET (291 aa). Residues 1047–1281 enclose the ABC transporter 2 domain; that stretch reads IKFDNLVMRY…QNGLLTWLVN (235 aa). ATP is bound at residue 1081 to 1088; sequence GRTGAGKS.

It belongs to the ABC transporter superfamily. ABCC family. Conjugate transporter (TC 3.A.1.208) subfamily.

It localises to the membrane. This is ABC transporter C family member 12 (abcC12) from Dictyostelium discoideum (Social amoeba).